Reading from the N-terminus, the 386-residue chain is Cytochrome b (386 aa).

Transmembrane regions (helical) follow at residues 39–59 (FGSLLGLCLVIQLITGIFLAM), 83–104 (FMLKYIHANGASLFFLCVYIHM), 119–139 (WNIGVIIYLVMMLTAFLGYVL), and 184–204 (FFSLHYLFPFLIAGLGVLHIL). Residues H89 and H103 each contribute to the heme b site. Heme b-binding residues include H188 and H202. H207 contacts a ubiquinone. The next 4 helical transmembrane spans lie at 232-252 (YKDLFGIMVLSSILVILCYFM), 294-314 (LGGVLAMVFSILVLLLLPFIH), 326-346 (LGKIAFWFLVADFILLTWLGA), and 353-374 (YIMIGQFASLFYFCYFLVLVPL).

The protein belongs to the cytochrome b family. As to quaternary structure, the main subunits of complex b-c1 are: cytochrome b, cytochrome c1 and the Rieske protein. The cofactor is heme b.

It is found in the mitochondrion inner membrane. Functionally, component of the ubiquinol-cytochrome c reductase complex (complex III or cytochrome b-c1 complex) that is part of the mitochondrial respiratory chain. The b-c1 complex mediates electron transfer from ubiquinol to cytochrome c. Contributes to the generation of a proton gradient across the mitochondrial membrane that is then used for ATP synthesis. The chain is Cytochrome b (MT-CYB) from Sarcophyton glaucum (Toadstool umbrella leather coral).